The chain runs to 199 residues: GTP-binding protein Di-Ras2 (199 aa).

Residues 14-21 (GAGGVGKS), 33-39 (RESYIPT), 61-65 (DTTGS), and 121-124 (NKCD) contribute to the GTP site. Position 35 is a phosphoserine (Ser-35). An Effector region motif is present at residues 36–44 (YIPTVEDTY). Ser-126 bears the Phosphoserine mark. 152 to 153 (AK) is a GTP binding site. A Cysteine methyl ester modification is found at Cys-196. The S-geranylgeranyl cysteine moiety is linked to residue Cys-196. The propeptide at 197-199 (VIM) is removed in mature form.

This sequence belongs to the small GTPase superfamily. Di-Ras family. Post-translationally, ubiquitinated by the ECS(ASB11) complex via 'Lys-11'-linked ubiquitin chains, leading to its degradation by the proteasome.

Its subcellular location is the cell membrane. The enzyme catalyses GTP + H2O = GDP + phosphate + H(+). In terms of biological role, displays low GTPase activity and exists predominantly in the GTP-bound form. In Pongo abelii (Sumatran orangutan), this protein is GTP-binding protein Di-Ras2 (DIRAS2).